We begin with the raw amino-acid sequence, 288 residues long: ATP synthase gamma chain (288 aa).

The protein belongs to the ATPase gamma chain family. In terms of assembly, F-type ATPases have 2 components, CF(1) - the catalytic core - and CF(0) - the membrane proton channel. CF(1) has five subunits: alpha(3), beta(3), gamma(1), delta(1), epsilon(1). CF(0) has three main subunits: a, b and c.

The protein localises to the cell inner membrane. In terms of biological role, produces ATP from ADP in the presence of a proton gradient across the membrane. The gamma chain is believed to be important in regulating ATPase activity and the flow of protons through the CF(0) complex. The protein is ATP synthase gamma chain of Rickettsia typhi (strain ATCC VR-144 / Wilmington).